A 308-amino-acid chain; its full sequence is UPF0026 protein jhp_0109 (308 aa).

Residues Phe-18–Gln-247 enclose the Radical SAM core domain. [4Fe-4S] cluster is bound by residues Cys-33, Cys-37, and Cys-40.

It belongs to the UPF0026 family. The cofactor is [4Fe-4S] cluster.

In Helicobacter pylori (strain J99 / ATCC 700824) (Campylobacter pylori J99), this protein is UPF0026 protein jhp_0109.